The primary structure comprises 128 residues: Cytochrome c-type biogenesis protein CcmE (128 aa).

Topologically, residues 1–8 (MQKIVRNR) are cytoplasmic. The chain crosses the membrane as a helical; Signal-anchor for type II membrane protein span at residues 9-29 (LIKIIICFCSACLGISIILYN). Topologically, residues 30–128 (LEKNIIFFFP…KHDENYRPPS (99 aa)) are periplasmic. H120 and Y124 together coordinate heme.

This sequence belongs to the CcmE/CycJ family.

The protein resides in the cell inner membrane. In terms of biological role, heme chaperone required for the biogenesis of c-type cytochromes. Transiently binds heme delivered by CcmC and transfers the heme to apo-cytochromes in a process facilitated by CcmF and CcmH. The sequence is that of Cytochrome c-type biogenesis protein CcmE from Rickettsia prowazekii (strain Madrid E).